The primary structure comprises 299 residues: Glycine--tRNA ligase alpha subunit (299 aa).

It belongs to the class-II aminoacyl-tRNA synthetase family. Tetramer of two alpha and two beta subunits.

The protein localises to the cytoplasm. It carries out the reaction tRNA(Gly) + glycine + ATP = glycyl-tRNA(Gly) + AMP + diphosphate. The polypeptide is Glycine--tRNA ligase alpha subunit (Pediococcus pentosaceus (strain ATCC 25745 / CCUG 21536 / LMG 10740 / 183-1w)).